The sequence spans 554 residues: Putative F-box/LRR-repeat protein 8 (554 aa).

The F-box domain maps to 71–117; the sequence is YDYISNLPDECLSLIFQSLTCADLKRCSLVCRRWLTIEGQCRHRLSL. LRR repeat units follow at residues 119–144, 148–173, 174–199, 205–224, 250–275, 301–325, 326–351, 354–379, 383–404, 405–428, 430–455, and 456–480; these read AQSD…VLRS, SLGI…KLRG, CPEI…SFGS, KGMN…SVKR, KELH…KIFR, RIQM…HLVK, TPDC…HIDG, TNRI…VLIG, TKLS…ALCG, SDTV…KLCI, NCPI…KVKK, and CRGV…NLDA.

This is Putative F-box/LRR-repeat protein 8 (FBL8) from Arabidopsis thaliana (Mouse-ear cress).